A 119-amino-acid polypeptide reads, in one-letter code: Large ribosomal subunit protein eL31y (119 aa).

The protein belongs to the eukaryotic ribosomal protein eL31 family.

In Arabidopsis thaliana (Mouse-ear cress), this protein is Large ribosomal subunit protein eL31y (RPL31B).